The primary structure comprises 435 residues: Serine/threonine-protein kinase 40 (435 aa).

Residues 35–332 (FILGPRLGNS…EELDSLSSII (298 aa)) form the Protein kinase domain. ATP-binding positions include 41-49 (LGNSPVPSI) and K66. D197 (proton acceptor) is an active-site residue.

This sequence belongs to the protein kinase superfamily. CAMK Ser/Thr protein kinase family.

The protein resides in the nucleus. It localises to the cytoplasm. It catalyses the reaction L-seryl-[protein] + ATP = O-phospho-L-seryl-[protein] + ADP + H(+). The enzyme catalyses L-threonyl-[protein] + ATP = O-phospho-L-threonyl-[protein] + ADP + H(+). Functionally, may be a negative regulator of NF-kappa-B and p53-mediated gene transcription. This Gallus gallus (Chicken) protein is Serine/threonine-protein kinase 40 (STK40).